A 707-amino-acid chain; its full sequence is DNA ligase (707 aa).

NAD(+) is bound by residues 36-40 (DADFD), 85-86 (SL), and E116. Residue K118 is the N6-AMP-lysine intermediate of the active site. Residues R139, E180, K298, and K322 each coordinate NAD(+). Residues C416, C419, C434, and C440 each coordinate Zn(2+). The 95-residue stretch at 613–707 (AASSKIAGRS…STHVDPERMV (95 aa)) folds into the BRCT domain.

This sequence belongs to the NAD-dependent DNA ligase family. LigA subfamily. Mg(2+) is required as a cofactor. It depends on Mn(2+) as a cofactor.

The catalysed reaction is NAD(+) + (deoxyribonucleotide)n-3'-hydroxyl + 5'-phospho-(deoxyribonucleotide)m = (deoxyribonucleotide)n+m + AMP + beta-nicotinamide D-nucleotide.. Its function is as follows. DNA ligase that catalyzes the formation of phosphodiester linkages between 5'-phosphoryl and 3'-hydroxyl groups in double-stranded DNA using NAD as a coenzyme and as the energy source for the reaction. It is essential for DNA replication and repair of damaged DNA. The sequence is that of DNA ligase from Nitrosospira multiformis (strain ATCC 25196 / NCIMB 11849 / C 71).